Consider the following 101-residue polypeptide: Small nuclear ribonucleoprotein Sm D3 (101 aa).

The Sm domain occupies 6-78 (IPVKLLNEAQ…IKFIVVPDLL (73 aa)).

This sequence belongs to the snRNP core protein family. In terms of assembly, component of the Sm core complex, present in spliceosomal snRNP U1, U2, U4/U6 and U5. The core complex contains SMB1, SMD1, SMD2, SMD3, SME1, SMX3 and SMX2 (Sm proteins B, D1, D2, D3, E, F and G, respectively), and is probably a heptameric ring structure. SMD3 specifically interacts with SMB1. Belongs to the CWC complex (or CEF1-associated complex), a spliceosome sub-complex reminiscent of a late-stage spliceosome composed of the U2, U5 and U6 snRNAs and at least BUD13, BUD31, BRR2, CDC40, CEF1, CLF1, CUS1, CWC2, CWC15, CWC21, CWC22, CWC23, CWC24, CWC25, CWC27, ECM2, HSH155, IST3, ISY1, LEA1, MSL1, NTC20, PRP8, PRP9, PRP11, PRP19, PRP21, PRP22, PRP45, PRP46, SLU7, SMB1, SMD1, SMD2, SMD3, SMX2, SMX3, SNT309, SNU114, SPP2, SYF1, SYF2, RSE1 and YJU2. Component of the U4/U6-U5 tri-snRNP complex composed of the U4, U6 and U5 snRNAs and at least PRP3, PRP4, PRP6, PRP8, PRP18, PRP31, PRP38, SNU13, SNU23, SNU66, SNU114, SPP381, SMB1, SMD1, SMD2, SMD3, SMX2, SMX3, LSM2, LSM3, LSM4, LSM5, LSM6, LSM7, LSM8, BRR2 and DIB1.

The protein localises to the cytoplasm. Its subcellular location is the cytosol. It localises to the nucleus. Its function is as follows. Plays a role in pre-mRNA splicing as a core component of the spliceosomal U1, U2, U4 and U5 small nuclear ribonucleoproteins (snRNPs), the building blocks of the spliceosome. Also binds telomerase RNA and is required for its accumulation. The protein is Small nuclear ribonucleoprotein Sm D3 (SMD3) of Saccharomyces cerevisiae (strain ATCC 204508 / S288c) (Baker's yeast).